Here is a 269-residue protein sequence, read N- to C-terminus: 4-chlorobenzoyl coenzyme A dehalogenase (269 aa).

Residues Arg24 and 62 to 67 (AGFYLR) contribute to the substrate site. The active-site Proton acceptor is the His90. Gly114 lines the substrate pocket. Asp145 functions as the Nucleophile in the catalytic mechanism. Arg257 lines the substrate pocket.

Belongs to the enoyl-CoA hydratase/isomerase family. As to quaternary structure, homotetramer. Homotetramer, homooctamer and larger multimers. Homotrimer.

It carries out the reaction 4-chlorobenzoyl-CoA + H2O = 4-hydroxybenzoyl-CoA + chloride + H(+). Its pathway is xenobiotic degradation; 4-chlorobenzoate degradation; 4-hydroxybenzoate from 4-chlorobenzoate: step 2/3. With respect to regulation, inactivated by 1 mM Ag(+) and by 5 mM Cu(2+). Partially inhibited by 5 mM Zn(2+), Mn(2+), Co(2+), Fe(2+) and Ni(2+). Unaffected by 10 mM Na(+), K(+) and Li(+) and by 0.5 mM Mg(2+), Mn(2+), Fe(2+), Ca(2+), Co(2+) and Zn(2+). Inhibited by the sulfhydryl blocking agent 5,5'-dithio-bis-(2-nitrobenzoate), SDS and N-bromosuccinimide. Unaffected by sodium azide and EDTA. Inactivated following treatment with diethyl pyrocarbonate; this inactivation is reversible by treatment with hydroxylamine. In terms of biological role, dehalogenates 4-chlorobenzoyl-CoA, 4-iodobenzoyl-CoA and 4-bromobenzoyl-CoA, but not 4-fluorobenzoyl-CoA. Inactive towards crotonyl-CoA, alpha-methylcrotonyl-CoA and beta-methylcrotonyl-CoA. In Pseudomonas sp. (strain CBS-3), this protein is 4-chlorobenzoyl coenzyme A dehalogenase.